Reading from the N-terminus, the 157-residue chain is 2-C-methyl-D-erythritol 2,4-cyclodiphosphate synthase (157 aa).

2 residues coordinate a divalent metal cation: Asp-8 and His-10. 4-CDP-2-C-methyl-D-erythritol 2-phosphate contacts are provided by residues 8 to 10 (DVH) and 34 to 35 (HS). Position 42 (His-42) interacts with a divalent metal cation. 4-CDP-2-C-methyl-D-erythritol 2-phosphate is bound by residues 56 to 58 (DIG), 61 to 65 (FPDTD), 100 to 106 (AQAPKMA), 132 to 135 (TTTE), Phe-139, and Arg-142.

The protein belongs to the IspF family. As to quaternary structure, homotrimer. It depends on a divalent metal cation as a cofactor.

The catalysed reaction is 4-CDP-2-C-methyl-D-erythritol 2-phosphate = 2-C-methyl-D-erythritol 2,4-cyclic diphosphate + CMP. The protein operates within isoprenoid biosynthesis; isopentenyl diphosphate biosynthesis via DXP pathway; isopentenyl diphosphate from 1-deoxy-D-xylulose 5-phosphate: step 4/6. Involved in the biosynthesis of isopentenyl diphosphate (IPP) and dimethylallyl diphosphate (DMAPP), two major building blocks of isoprenoid compounds. Catalyzes the conversion of 4-diphosphocytidyl-2-C-methyl-D-erythritol 2-phosphate (CDP-ME2P) to 2-C-methyl-D-erythritol 2,4-cyclodiphosphate (ME-CPP) with a corresponding release of cytidine 5-monophosphate (CMP). In Pseudomonas aeruginosa (strain ATCC 15692 / DSM 22644 / CIP 104116 / JCM 14847 / LMG 12228 / 1C / PRS 101 / PAO1), this protein is 2-C-methyl-D-erythritol 2,4-cyclodiphosphate synthase.